The sequence spans 697 residues: Long-chain-fatty-acid--CoA ligase 6 (697 aa).

A helical; Signal-anchor for type III membrane protein transmembrane segment spans residues 25–45 (LSATTLVSMGALAAILAYWLT). At 46–697 (HRPKALQPPC…QIEELYSISM (652 aa)) the chain is on the cytoplasmic side.

This sequence belongs to the ATP-dependent AMP-binding enzyme family. It depends on Mg(2+) as a cofactor. In terms of tissue distribution, expressed predominantly in brain and, to a much lesser extent, in heart and adrenal.

It is found in the mitochondrion outer membrane. The protein localises to the peroxisome membrane. Its subcellular location is the microsome membrane. It localises to the endoplasmic reticulum membrane. The catalysed reaction is a long-chain fatty acid + ATP + CoA = a long-chain fatty acyl-CoA + AMP + diphosphate. The enzyme catalyses (5Z,8Z,11Z,14Z)-eicosatetraenoate + ATP + CoA = (5Z,8Z,11Z,14Z)-eicosatetraenoyl-CoA + AMP + diphosphate. It carries out the reaction 15-hydroxy-(5Z,8Z,11Z,13E)-eicosatetraenoate + ATP + CoA = 15-hydroxy-(5Z,8Z,11Z,13E)-eicosatetraenoyl-CoA + AMP + diphosphate. It catalyses the reaction 12-hydroxy-(5Z,8Z,10E,14Z)-eicosatetraenoate + ATP + CoA = 12-hydroxy-(5Z,8Z,10E,14Z)-eicosatetraenoyl-CoA + AMP + diphosphate. The catalysed reaction is 5-hydroxy-(6E,8Z,11Z,14Z)-eicosatetraenoate + ATP + CoA = 5-hydroxy-(6E,8Z,11Z,14Z)-eicosatetraenoyl-CoA + AMP + diphosphate. The enzyme catalyses hexadecanoate + ATP + CoA = hexadecanoyl-CoA + AMP + diphosphate. It carries out the reaction (E)-hexadec-2-enoate + ATP + CoA = (2E)-hexadecenoyl-CoA + AMP + diphosphate. Its function is as follows. Catalyzes the conversion of long-chain fatty acids to their active form acyl-CoA for both synthesis of cellular lipids, and degradation via beta-oxidation. Plays an important role in fatty acid metabolism in brain and the acyl-CoAs produced may be utilized exclusively for the synthesis of the brain lipid. This is Long-chain-fatty-acid--CoA ligase 6 from Rattus norvegicus (Rat).